Reading from the N-terminus, the 279-residue chain is MQKYLEKANVLIEALPYIRKFNSKIILIKYGGSAMENEELKHCVMQDIALLKLVGLKPIIVHGGGKDISAMCEKLGVKSEFKNGLRVSDKATTEVASMVLNHINKNLVHSLQNLGVKAIGLCGKDGALLECVKKDENLAFVGTIQKVNSKILEELLEKDFLPIIAPIGMDENFNTYNINADDVACAIAKALRAEKLAFLTDTAGLYEDFNDKNSLISKISLEQAKILAPKIEGGMHVKLKSCIDACENGVKKVHILDGRVKHSLLLEFFTDEGIGTLVG.

Residues 64–65 (GG), Arg86, and Asn177 each bind substrate.

This sequence belongs to the acetylglutamate kinase family. ArgB subfamily.

It is found in the cytoplasm. The catalysed reaction is N-acetyl-L-glutamate + ATP = N-acetyl-L-glutamyl 5-phosphate + ADP. It participates in amino-acid biosynthesis; L-arginine biosynthesis; N(2)-acetyl-L-ornithine from L-glutamate: step 2/4. Functionally, catalyzes the ATP-dependent phosphorylation of N-acetyl-L-glutamate. This Campylobacter jejuni (strain RM1221) protein is Acetylglutamate kinase.